We begin with the raw amino-acid sequence, 236 residues long: Small ribosomal subunit protein uS2c (236 aa).

This sequence belongs to the universal ribosomal protein uS2 family.

The protein localises to the plastid. It is found in the chloroplast. The polypeptide is Small ribosomal subunit protein uS2c (rps2) (Carica papaya (Papaya)).